Reading from the N-terminus, the 865-residue chain is MALVLGSLLLLGLCGNSFSGGQPSSTDAPKAWNYELPATNYETQDSHKAGPIGILFELVHIFLYVVQPRDFPEDTLRKFLQKAYESKIDYDKPETVILGLKIVYYEAGIILCCVLGLLFIILMPLVGYFFCMCRCCNKCGGEMHQRQKENGPFLRKCFAISLLVICIIISIGIFYGFVANHQVRTRIKRSRKLADSNFKDLRTLLNETPEQIKYILAQYNTTKDKAFTDLNSINSVLGGGILDRLRPNIIPVLDEIKSMATAIKETKEALENMNSTLKSLHQQSTQLSSSLTSVKTSLRSSLNDPLCLVHPSSETCNSIRLSLSQLNSNPELRQLPPVDAELDNVNNVLRTDLDGLVQQGYQSLNDIPDRVQRQTTTVVAGIKRVLNSIGSDIDNVTQRLPIQDILSAFSVYVNNTESYIHRNLPTLEEYDSYWWLGGLVICSLLTLIVIFYYLGLLCGVCGYDRHATPTTRGCVSNTGGVFLMVGVGLSFLFCWILMIIVVLTFVFGANVEKLICEPYTSKELFRVLDTPYLLNEDWEYYLSGKLFNKSKMKLTFEQVYSDCKKNRGTYGTLHLQNSFNISEHLNINEHTGSISSELESLKVNLNIFLLGAAGRKNLQDFAACGIDRMNYDSYLAQTGKSPAGVNLLSFAYDLEAKANSLPPGNLRNSLKRDAQTIKTIHQQRVLPIEQSLSTLYQSVKILQRTGNGLLERVTRILASLDFAQNFITNNTSSVIIEETKKYGRTIIGYFEHYLQWIEFSISEKVASCKPVATALDTAVDVFLCSYIIDPLNLFWFGIGKATVFLLPALIFAVKLAKYYRRMDSEDVYDDVETIPMKNMENGNNGYHKDHVYGIHNPVMTSPSQH.

The signal sequence occupies residues 1-19; it reads MALVLGSLLLLGLCGNSFS. Residues 20–108 are Extracellular-facing; sequence GGQPSSTDAP…GLKIVYYEAG (89 aa). The chain crosses the membrane as a helical span at residues 109–129; sequence IILCCVLGLLFIILMPLVGYF. Over 130–157 the chain is Cytoplasmic; sequence FCMCRCCNKCGGEMHQRQKENGPFLRKC. The chain crosses the membrane as a helical span at residues 158-178; sequence FAISLLVICIIISIGIFYGFV. Topologically, residues 179 to 433 are extracellular; the sequence is ANHQVRTRIK…LPTLEEYDSY (255 aa). The N-linked (GlcNAc...) asparagine glycan is linked to Asn220. Lys225, Lys257, and Lys264 each carry N6-acetyllysine. N-linked (GlcNAc...) asparagine glycans are attached at residues Asn274, Asn395, and Asn414. The chain crosses the membrane as a helical span at residues 434-454; it reads WWLGGLVICSLLTLIVIFYYL. The Cytoplasmic segment spans residues 455–486; it reads GLLCGVCGYDRHATPTTRGCVSNTGGVFLMVG. A helical transmembrane segment spans residues 487-507; sequence VGLSFLFCWILMIIVVLTFVF. Topologically, residues 508 to 792 are extracellular; sequence GANVEKLICE…LCSYIIDPLN (285 aa). Asn548, Asn580, Asn729, and Asn730 each carry an N-linked (GlcNAc...) asparagine glycan. A helical membrane pass occupies residues 793–813; the sequence is LFWFGIGKATVFLLPALIFAV. Over 814–865 the chain is Cytoplasmic; sequence KLAKYYRRMDSEDVYDDVETIPMKNMENGNNGYHKDHVYGIHNPVMTSPSQH. Position 863 is a phosphoserine (Ser863).

It belongs to the prominin family. In terms of assembly, interacts with CDHR1 and with actin filaments. Interacts with NAT8 and NAT8B. Post-translationally, isoform 1 and isoform 2 are glycosylated. In terms of processing, acetylation at Lys-225, Lys-257 and Lys-264 by NAT8 and NAT8B may control PROM1 protein expression and its function in cell apoptosis. In terms of tissue distribution, isoform 1 is selectively expressed on CD34 hematopoietic stem and progenitor cells in adult and fetal bone marrow, fetal liver, cord blood and adult peripheral blood. Isoform 1 is not detected on other blood cells. Isoform 1 is also expressed in a number of non-lymphoid tissues including retina, pancreas, placenta, kidney, liver, lung, brain and heart. Found in saliva within small membrane particles. Isoform 2 is predominantly expressed in fetal liver, skeletal muscle, kidney, and heart as well as adult pancreas, kidney, liver, lung, and placenta. Isoform 2 is highly expressed in fetal liver, low in bone marrow, and barely detectable in peripheral blood. Isoform 2 is expressed on hematopoietic stem cells and in epidermal basal cells (at protein level). Expressed in adult retina by rod and cone photoreceptor cells (at protein level).

The protein localises to the apical cell membrane. The protein resides in the cell projection. It localises to the microvillus membrane. It is found in the cilium. Its subcellular location is the photoreceptor outer segment. The protein localises to the endoplasmic reticulum. The protein resides in the endoplasmic reticulum-Golgi intermediate compartment. Its function is as follows. May play a role in cell differentiation, proliferation and apoptosis. Binds cholesterol in cholesterol-containing plasma membrane microdomains and may play a role in the organization of the apical plasma membrane in epithelial cells. During early retinal development acts as a key regulator of disk morphogenesis. Involved in regulation of MAPK and Akt signaling pathways. In neuroblastoma cells suppresses cell differentiation such as neurite outgrowth in a RET-dependent manner. This is Prominin-1 (PROM1) from Homo sapiens (Human).